Here is a 170-residue protein sequence, read N- to C-terminus: Histone H1.9 (170 aa).

The 75-residue stretch at 34 to 108 (RKPTMSYVIL…GASGSLCLCK (75 aa)) folds into the H15 domain. A Phosphoserine modification is found at Ser-56. The tract at residues 118–140 (AKRCQDRQKSQKPQKPGQRESEP) is disordered.

Belongs to the histone H1/H5 family. As to expression, expressed exclusively in the testis by haploid germ cells (at protein level).

It localises to the nucleus. The protein localises to the chromosome. Functionally, DNA-binding protein that may be implicated in chromatin remodeling and/or transcriptional regulation during spermiogenesis, the process of spermatid maturation into spermatozoa. The protein is Histone H1.9 of Mus musculus (Mouse).